A 371-amino-acid polypeptide reads, in one-letter code: Flagellar P-ring protein 1 (371 aa).

A signal peptide spans 1–19 (MRRALLLAALLACAPPAFA).

This sequence belongs to the FlgI family. In terms of assembly, the basal body constitutes a major portion of the flagellar organelle and consists of four rings (L,P,S, and M) mounted on a central rod.

The protein resides in the periplasm. It is found in the bacterial flagellum basal body. Functionally, assembles around the rod to form the L-ring and probably protects the motor/basal body from shearing forces during rotation. This chain is Flagellar P-ring protein 1, found in Cereibacter sphaeroides (strain ATCC 17023 / DSM 158 / JCM 6121 / CCUG 31486 / LMG 2827 / NBRC 12203 / NCIMB 8253 / ATH 2.4.1.) (Rhodobacter sphaeroides).